The primary structure comprises 116 residues: Somatostatin (116 aa).

Residues 1 to 24 form the signal peptide; that stretch reads MLSCRLQCALAALCIVLALGGVTG. Positions 35–88 are excised as a propeptide; that stretch reads LQKSLAAATGKQELAKYFLAELLSEPNQTENDALEPEDLPQAAEQDEMRLELQR. A Threonine amide modification is found at threonine 43. A disulfide bridge connects residues cysteine 105 and cysteine 116.

Belongs to the somatostatin family. Post-translationally, C-terminal amidation of the neuronostatin peptide is required for its biological activity, including for the regulation of mean arterial pressure. As to expression, in the pancreas, somatostatin is expressed in delta cells of the islets of Langerhans. In the stomach, it is expressed in parietal cells of oxyntic mucosa and in the small intestine, it is found in the villus (at protein level). Neuronostatin is expressed in the pancreas in delta cells of the islets of Langerhans, as well as in the stomach, in parietal cells of oxyntic mucosa and in the small intestine, in the villus (at protein level).

The protein localises to the secreted. Inhibits the secretion of pituitary hormones, including that of growth hormone/somatotropin (GH1), PRL, ACTH, luteinizing hormone (LH) and TSH. Also impairs ghrelin- and GnRH-stimulated secretion of GH1 and LH; the inhibition of ghrelin-stimulated secretion of GH1 can be further increased by neuronostatin. In terms of biological role, may enhance low-glucose-induced glucagon release by pancreatic alpha cells. This effect may be mediated by binding to GPR107 and PKA activation. May regulate cardiac contractile function. May compromise cardiomyocyte viability. In the central nervous system, may impair memory retention and may affect hippocampal excitability. May also have anxiolytic and anorexigenic effects. May play a role in arterial pressure regulation. May inhibit basal, but not ghrelin- or GnRH-stimulated secretion of GH1 or LH, but does not affect the release of other pituitary hormones, including PRL, ACTH, FSH or TSH. Potentiates inhibitory action of somatostatin on ghrelin-stimulated secretion of GH1, but not that on GnRH-stimulated secretion of LH. This is Somatostatin (Sst) from Mus musculus (Mouse).